Here is a 690-residue protein sequence, read N- to C-terminus: Secreted LysM effector Vd5LysM (690 aa).

N-linked (GlcNAc...) asparagine glycosylation is found at Asn4 and Asn69. LysM domains are found at residues 203 to 248 (TQYT…SLCI), 253 to 301 (DTVT…TLCI), and 341 to 387 (RWYN…SYCV). Asn260, Asn295, Asn375, Asn410, Asn423, and Asn492 each carry an N-linked (GlcNAc...) asparagine glycan. Residues 523–546 (PATATTGDGGPTPPAPTHSGQPQD) form a disordered region. In terms of domain architecture, LysM 4 spans 549–596 (TWHVVSSGDSCQSVADDAGISRDQFHDWNPAVGRDCSTNFWLGQAYCV). Low complexity predominate over residues 606–619 (STVASSTTSSVTPG). The segment at 606-636 (STVASSTTSSVTPGPSKPEPPGPTHTGQPSD) is disordered. A LysM 5 domain is found at 639-686 (EWDVVETGDTCGSLAESNDISLSQFFDWNPAVSRDCVANFWIGQAYCI).

It belongs to the secreted LysM effector family.

Might have a role in sequestration of chitin oligosaccharides (breakdown products of fungal cell walls that are released during invasion and act as triggers of host immunity) to dampen host defense. Does not play an important role during host colonization. The protein is Secreted LysM effector Vd5LysM of Verticillium dahliae (strain VdLs.17 / ATCC MYA-4575 / FGSC 10137) (Verticillium wilt).